Here is a 371-residue protein sequence, read N- to C-terminus: Solute carrier family 35 member F6 (371 aa).

A signal peptide spans Met-1–Ala-25. Helical transmembrane passes span Phe-48–Leu-68 and Leu-89–Leu-109. The EamA domain maps to Leu-104–Leu-160. A glycan (N-linked (GlcNAc...) asparagine) is linked at Asn-110. Helical transmembrane passes span Phe-117–Gly-137, Leu-140–Leu-160, Val-176–Leu-196, Gly-216–Gly-236, Leu-261–Ile-281, Leu-295–Trp-312, and Ala-317–Leu-336. The interval Gly-347–Ser-371 is disordered. At Thr-365 the chain carries Phosphothreonine.

It belongs to the SLC35F solute transporter family. As to quaternary structure, interacts with SLC25A5.

It is found in the mitochondrion. The protein localises to the lysosome membrane. In terms of biological role, involved in the maintenance of mitochondrial membrane potential in pancreatic ductal adenocarcinoma (PDAC) cells. Promotes pancreatic ductal adenocarcinoma (PDAC) cell growth. May play a role as a nucleotide-sugar transporter. The chain is Solute carrier family 35 member F6 (SLC35F6) from Pongo abelii (Sumatran orangutan).